A 1032-amino-acid chain; its full sequence is Y' element ATP-dependent helicase YPR204W (1032 aa).

Positions 1–175 constitute a Helicase ATP-binding domain; the sequence is MADTPSVAVQ…LQRIGLTGLA (175 aa). ATP is bound at residue 11-18; it reads APPGYGKT. A DEAH box motif is present at residues 121–124; it reads DEFH. The Helicase C-terminal domain maps to 232-381; it reads KLLLALFEIE…EFYGLESKKG (150 aa). Residues 455 to 634 are compositionally biased toward low complexity; that stretch reads ANASTNATTN…ATTTESTNAS (180 aa). A disordered region spans residues 455-658; it reads ANASTNATTN…RFHPVTDINK (204 aa). Basic and acidic residues predominate over residues 635–658; sequence AKEDANKDGNAEDNRFHPVTDINK.

Belongs to the helicase family. Yeast subtelomeric Y' repeat subfamily.

Functionally, catalyzes DNA unwinding and is involved in telomerase-independent telomere maintenance. This Saccharomyces cerevisiae (strain ATCC 204508 / S288c) (Baker's yeast) protein is Y' element ATP-dependent helicase YPR204W.